A 425-amino-acid chain; its full sequence is 3-isopropylmalate dehydratase large subunit (425 aa).

Residues Cys306, Cys366, and Cys369 each contribute to the [4Fe-4S] cluster site.

It belongs to the aconitase/IPM isomerase family. LeuC type 2 subfamily. Heterodimer of LeuC and LeuD. [4Fe-4S] cluster serves as cofactor.

It catalyses the reaction (2R,3S)-3-isopropylmalate = (2S)-2-isopropylmalate. It participates in amino-acid biosynthesis; L-leucine biosynthesis; L-leucine from 3-methyl-2-oxobutanoate: step 2/4. In terms of biological role, catalyzes the isomerization between 2-isopropylmalate and 3-isopropylmalate, via the formation of 2-isopropylmaleate. This chain is 3-isopropylmalate dehydratase large subunit, found in Nautilia profundicola (strain ATCC BAA-1463 / DSM 18972 / AmH).